The following is a 319-amino-acid chain: 4-diphosphocytidyl-2-C-methyl-D-erythritol kinase (319 aa).

The active site involves Lys21. Residue Pro106–Ser116 coordinates ATP. The active site involves Asp148.

The protein belongs to the GHMP kinase family. IspE subfamily.

It catalyses the reaction 4-CDP-2-C-methyl-D-erythritol + ATP = 4-CDP-2-C-methyl-D-erythritol 2-phosphate + ADP + H(+). It participates in isoprenoid biosynthesis; isopentenyl diphosphate biosynthesis via DXP pathway; isopentenyl diphosphate from 1-deoxy-D-xylulose 5-phosphate: step 3/6. Catalyzes the phosphorylation of the position 2 hydroxy group of 4-diphosphocytidyl-2C-methyl-D-erythritol. In Prochlorococcus marinus (strain MIT 9313), this protein is 4-diphosphocytidyl-2-C-methyl-D-erythritol kinase.